Reading from the N-terminus, the 399-residue chain is MAKLTVKDVELKGKKVLVRVDFNVPVKDGVITNDNRITAALPTIKYILEQGGRAILFSHLGRVKEEADKEGKSLAPVAADLAAKLGQDVKFIPGVTRGAELEAAVNALEDGQVLLVENTRFEDVDGKKESKNDPELGKYWASLGDGIFVNDAFGTAHRAHASNVGISANVEKAVAGFLLENEIAYIQEAVENPERPFVAILGGSKVSDKIGVIENLLEKADKVLIGGGMTYTFFKAQGIEIGNSLVEEDKLDVAKALLEKSNGKLILPVDSKEANAFADYTEVKYTEGEAVDPGFLGLDIGPKSIAKFDEALTGAKTVVWNGPMGVFENPDFQAGTIGVMDAIVKQPGVKSIIGGGDSAAAAINLGYADKFSWISTGGGASMELLEGKELPGLAALTEK.

Substrate is bound by residues 21 to 23 (DFN), arginine 36, 59 to 62 (HLGR), arginine 120, and arginine 158. ATP contacts are provided by residues lysine 209, glycine 297, glutamate 328, and 355-358 (GGDS).

Belongs to the phosphoglycerate kinase family. In terms of assembly, monomer.

The protein localises to the cytoplasm. It carries out the reaction (2R)-3-phosphoglycerate + ATP = (2R)-3-phospho-glyceroyl phosphate + ADP. The protein operates within carbohydrate degradation; glycolysis; pyruvate from D-glyceraldehyde 3-phosphate: step 2/5. In Streptococcus thermophilus (strain CNRZ 1066), this protein is Phosphoglycerate kinase.